The sequence spans 309 residues: Fructosamine-3-kinase (309 aa).

N-acetylmethionine is present on Met-1. An ATP-binding site is contributed by 89–91; that stretch reads EHL. Asp-217 functions as the Proton acceptor in the catalytic mechanism.

The protein belongs to the fructosamine kinase family. In terms of assembly, monomer. Widely expressed. Expressed in erythrocytes.

The catalysed reaction is N(6)-(D-fructosyl)-L-lysyl-[protein] + ATP = N(6)-(3-O-phospho-D-fructosyl)-L-lysyl-[protein] + ADP + H(+). It catalyses the reaction N(6)-D-ribulosyl-L-lysyl-[protein] + ATP = N(6)-(3-O-phospho-D-ribulosyl)-L-lysyl-[protein] + ADP + H(+). The enzyme catalyses N(6)-(D-psicosyl)-L-lysyl-[protein] + ATP = N(6)-(3-O-phospho-D-psicosyl)-L-lysyl-[protein] + ADP + H(+). Its function is as follows. Fructosamine-3-kinase involved in protein deglycation by mediating phosphorylation of fructoselysine residues on glycated proteins, to generate fructoselysine-3 phosphate. Fructoselysine-3 phosphate adducts are unstable and decompose under physiological conditions. Involved in intracellular deglycation in erythrocytes. Involved in the response to oxidative stress by mediating deglycation of NFE2L2/NRF2, glycation impairing NFE2L2/NRF2 function. Also able to phosphorylate psicosamines and ribulosamines. The chain is Fructosamine-3-kinase from Homo sapiens (Human).